The following is a 153-amino-acid chain: Putative nuclear shuttle protein (153 aa).

It belongs to the nanoviridae nuclear shuttle protein family.

The protein resides in the host nucleus. It localises to the host cytoplasm. Its function is as follows. Putative nuclear shuttle protein. The protein is Putative nuclear shuttle protein (DNA-N) of Trifolium subterraneum (Subterranean clover).